Here is a 176-residue protein sequence, read N- to C-terminus: Tumor necrosis factor receptor superfamily member 23 (176 aa).

The first 29 residues, 1 to 29 (MVTFSHVSSLSHWFLLLLLLNLFLPVIFA), serve as a signal peptide directing secretion. TNFR-Cys repeat units lie at residues 37-72 (NCPD…QGQC), 74-114 (KCHP…DRKC), and 115-155 (ECQI…NTVC). Disulfide bonds link cysteine 38/cysteine 49, cysteine 50/cysteine 63, cysteine 53/cysteine 72, cysteine 75/cysteine 90, cysteine 93/cysteine 106, cysteine 96/cysteine 114, cysteine 116/cysteine 131, cysteine 134/cysteine 147, and cysteine 137/cysteine 155. N-linked (GlcNAc...) asparagine glycosylation is present at asparagine 148. A lipid anchor (GPI-anchor amidated cysteine) is attached at cysteine 155. Positions 156-176 (SSSVSNPRNWLFLLMLIVFCI) are cleaved as a propeptide — removed in mature form.

As to expression, ubiquitous.

Its subcellular location is the cell membrane. Functionally, receptor for the cytotoxic ligand TRAIL. Lacks a cytoplasmic death domain and hence is not capable of inducing apoptosis. May protect cells against TRAIL mediated apoptosis through ligand competition. Cannot induce the NF-kappa-B pathway. The protein is Tumor necrosis factor receptor superfamily member 23 (Tnfrsf23) of Mus musculus (Mouse).